Reading from the N-terminus, the 21-residue chain is Agglutinin beta-1 chain (21 aa).

Over residues Asn-1–Ile-10 the composition is skewed to polar residues. Positions Asn-1–Asn-21 are disordered.

Belongs to the jacalin lectin family. In terms of assembly, formed of four alpha chains and four beta chains.

In terms of biological role, D-galactose-specific lectin, binds the T-antigen structure Gal-beta1,3-GalNAc. The chain is Agglutinin beta-1 chain from Maclura pomifera (Osage orange).